The chain runs to 130 residues: Metastasis-suppressor KiSS-1 (130 aa).

The first 19 residues, 1–19 (MISLASWQLLLLLCVASFG), serve as a signal peptide directing secretion. The segment at 52–91 (RYAESKPGAAGLRARRTSPCPPVENPTGHQRPPCATRSRL) is disordered. Residues Cys71 and Cys85 are joined by a disulfide bond. The residue at position 110 (Tyr110) is a Phosphotyrosine. Positions 110-119 (YNWNSFGLRY) are essential for receptor binding and receptor activation. At Tyr119 the chain carries Tyrosine amide.

This sequence belongs to the KISS1 family. As to expression, highest levels in the cecum and colon. Moderate levels present in the liver, spleen, kidney, ovary, uterus and small intestine. Low levels in the stomach, pancreas and placenta. Expressed only moderately in the placenta. Persistent expression is detected in hypothalamus throughout postnatal development, with maximum expression levels at puberty in both male and female. Hypothalamic expression is sensitive to neonatal imprinting by estrogen. Expression is higher in the hypothalamus than in the brainstem and spinal cord. In the brain, metastin-like immunoreactivity is found mainly in three groups of cells: dorsomedial hypothalamic nucleus, nucleus of the solitary tract, and caudal ventrolateral medulla.

The protein resides in the secreted. Metastasis suppressor protein. May regulate events downstream of cell-matrix adhesion, perhaps involving cytoskeletal reorganization. Generates a C-terminally amidated peptide, metastin which functions as the endogenous ligand of the G-protein coupled receptor GPR54. The receptor is also essential for normal gonadotropin-released hormone physiology and for puberty. The hypothalamic KiSS1/GPR54 system is a pivotal factor in central regulation of the gonadotropic axis at puberty and in adulthood. Intracerebroventricular administration induces an increase in serum LH and FSH levels in prepubertal male and female as well as in adult animals. This is Metastasis-suppressor KiSS-1 (Kiss1) from Rattus norvegicus (Rat).